The chain runs to 551 residues: Cleavage and polyadenylation specificity factor subunit 6 (551 aa).

A necessary for interaction with NXF1 region spans residues 1–213 (MADGVDHIDI…RGRFPGAVPG (213 aa)). Positions 81–161 (IALYIGNLTW…QSPVVTPCNK (81 aa)) constitute an RRM domain. A necessary for interaction with NUDT21/CPSF5 region spans residues 81–161 (IALYIGNLTW…QSPVVTPCNK (81 aa)). The necessary for nuclear paraspeckles localization stretch occupies residues 81 to 161 (IALYIGNLTW…QSPVVTPCNK (81 aa)). Thr157 carries the post-translational modification Phosphothreonine. Over residues 169–180 (MQSRKTTQSGQM) the composition is skewed to polar residues. Disordered regions lie at residues 169–411 (MQSR…PLSE) and 477–551 (LHGI…YRHR). The span at 184-193 (GKAGPPGGGS) shows a compositional bias: gly residues. The short motif at 202–206 (RGRGR) is the GAR element. Residues 207 to 219 (FPGAVPGGDRFPG) are compositionally biased toward low complexity. 3 stretches are compositionally biased toward pro residues: residues 220–265 (PAGP…PLAG), 285–366 (GQPP…PPPT), and 377–388 (GPPPTDPYGRPP). Residues 389–404 (PYDRGDYGPPGREMDT) show a composition bias toward basic and acidic residues. Thr404 and Thr407 each carry phosphothreonine. The sufficient for nuclear speckle localization stretch occupies residues 404–551 (TARTPLSEAE…RDREREYRHR (148 aa)). Residues 405–551 (ARTPLSEAEF…RDREREYRHR (147 aa)) form a necessary for RNA-binding region. The segment at 481–551 (ESKSYGSGSR…RDREREYRHR (71 aa)) is necessary for interaction with SRSF3, SRSF7 and TRA2B/SFRS10. Basic and acidic residues predominate over residues 489 to 503 (SRRERSRERDHSRSR). The segment at 490-551 (RRERSRERDH…RDREREYRHR (62 aa)) is arg/Ser-rich domain. Ser494, Ser500, Ser511, Ser513, and Ser525 each carry phosphoserine. Residues 504–514 (EKSRRHKSRSR) are compositionally biased toward basic residues. The tract at residues 510–551 (KSRSRDRHDDYYRERSRERERHRDRDRDRDRERDREREYRHR) is sufficient for nuclear targeting. The span at 515-551 (DRHDDYYRERSRERERHRDRDRDRDRERDREREYRHR) shows a compositional bias: basic and acidic residues.

Belongs to the RRM CPSF6/7 family. In terms of assembly, component of the cleavage factor Im (CFIm) complex which is a heterotetramer composed of two subunits of NUDT21/CPSF5 and two subunits of CPSF6 or CPSF7 or a heterodimer of CPSF6 and CPSF7. The cleavage factor Im (CFIm) complex associates with the CPSF and CSTF complexes to promote the assembly of the core mRNA 3'-processing machinery. Associates with the exon junction complex (EJC). Associates with the 80S ribosome particle. Interacts (via the RRM domain) with NUDT21/CPSF5; this interaction is direct and enhances binding to RNA. Interacts (via Arg/Ser-rich domain) with FIP1L1 (preferentially via unphosphorylated form and Arg/Glu/Asp-rich domain); this interaction mediates, at least in part, the interaction between the CFIm and CPSF complexes and may be inhibited by CPSF6 hyper-phosphorylation. Interacts (via N-terminus) with NXF1; this interaction is direct. Interacts with SRSF3. Interacts with SRSF7. Interacts with SNRNP70. Interacts with TRA2B/SFRS10. Interacts with UPF1. Interacts with UPF3B. Interacts with VIRMA. Interacts (via Arg/Ser-rich domain) with TNPO3; promoting nuclear import of CPSF6 independently of its phosphorylation status. Interacts with YTHDC1. Phosphorylated. Phosphorylated in the Arg/Ser-rich domain by SRPK1, in vitro. Post-translationally, symmetrically dimethylated on arginine residues by PRMT5 in a WDR77- and CLNS1A-dependent manner. Asymmetrically dimethylated on arginine residues by PRMT1. In terms of processing, symmetrically dimethylated on arginine residues in the GAR motif by PRMT5 in a WDR77- and CLNS1A-dependent manner. Asymmetrically dimethylated on arginine residues in the GAR motif by PRMT1. In terms of tissue distribution, expressed in testis. Expressed in male germ cells (at protein level).

The protein localises to the nucleus. It localises to the nucleoplasm. Its subcellular location is the nucleus speckle. The protein resides in the cytoplasm. Component of the cleavage factor Im (CFIm) complex that functions as an activator of the pre-mRNA 3'-end cleavage and polyadenylation processing required for the maturation of pre-mRNA into functional mRNAs. CFIm contributes to the recruitment of multiprotein complexes on specific sequences on the pre-mRNA 3'-end, so called cleavage and polyadenylation signals (pA signals). Most pre-mRNAs contain multiple pA signals, resulting in alternative cleavage and polyadenylation (APA) producing mRNAs with variable 3'-end formation. The CFIm complex acts as a key regulator of cleavage and polyadenylation site choice during APA through its binding to 5'-UGUA-3' elements localized in the 3'-untranslated region (UTR) for a huge number of pre-mRNAs. CPSF6 enhances NUDT21/CPSF5 binding to 5'-UGUA-3' elements localized upstream of pA signals and promotes RNA looping, and hence activates directly the mRNA 3'-processing machinery. Plays a role in mRNA export. This is Cleavage and polyadenylation specificity factor subunit 6 from Mus musculus (Mouse).